Consider the following 380-residue polypeptide: Chorismate synthase (380 aa).

R49 contacts NADP(+). Residues G288, 303–307 (KPPSS), and R330 each bind FMN.

Belongs to the chorismate synthase family. It depends on FMNH2 as a cofactor.

The enzyme catalyses 5-O-(1-carboxyvinyl)-3-phosphoshikimate = chorismate + phosphate. It participates in metabolic intermediate biosynthesis; chorismate biosynthesis; chorismate from D-erythrose 4-phosphate and phosphoenolpyruvate: step 7/7. Functionally, catalyzes the anti-1,4-elimination of the C-3 phosphate and the C-6 proR hydrogen from 5-enolpyruvylshikimate-3-phosphate (EPSP) to yield chorismate, which is the branch point compound that serves as the starting substrate for the three terminal pathways of aromatic amino acid biosynthesis. This reaction introduces a second double bond into the aromatic ring system. In Aeropyrum pernix (strain ATCC 700893 / DSM 11879 / JCM 9820 / NBRC 100138 / K1), this protein is Chorismate synthase.